The sequence spans 607 residues: Serum albumin (607 aa).

Positions 1 to 16 are cleaved as a signal peptide; it reads MKWTILTALLIISAES. A propeptide spanning residues 17–20 is cleaved from the precursor; the sequence is KNLY. 3 Albumin domains span residues 19-209, 210-401, and 403-600; these read LYKR…TQLK, KALH…HVLA, and AIKE…ILIE. His-27 is a Cu cation binding site. 17 cysteine pairs are disulfide-bonded: Cys-77-Cys-86, Cys-99-Cys-115, Cys-114-Cys-125, Cys-147-Cys-192, Cys-191-Cys-200, Cys-223-Cys-269, Cys-268-Cys-276, Cys-288-Cys-302, Cys-301-Cys-312, Cys-339-Cys-384, Cys-383-Cys-392, Cys-415-Cys-461, Cys-460-Cys-471, Cys-484-Cys-500, Cys-499-Cys-510, Cys-537-Cys-582, and Cys-581-Cys-590. Zn(2+) contacts are provided by His-270 and Asp-272. 2 residues coordinate Ca(2+): Asp-272 and Glu-275.

This sequence belongs to the ALB/AFP/VDB family. Plasma. In the skin, widely distributed around the membranes of epithelial layer cells and within the stratum spongiosum of the dermis (at protein level).

Its subcellular location is the secreted. Functionally, serum albumin, the main protein of plasma, has a good binding capacity for water, Ca(2+), Na(+), K(+), fatty acids, hormones, bilirubin and drugs. Its main function is the regulation of the colloidal osmotic pressure of blood. Potent inhibitor of trypsin but has no inhibitory effect on thrombin, chymotrypsin, elastase and subtilisin. This chain is Serum albumin, found in Bombina maxima (Giant fire-bellied toad).